The chain runs to 1648 residues: Pleiotropic ABC efflux transporter of multiple drugs YBT1 (1648 aa).

The helical transmembrane segment at 28–48 threads the bilayer; that stretch reads NYVPTTLVTISILILLHNFFI. N72 carries N-linked (GlcNAc...) asparagine glycosylation. 4 consecutive transmembrane segments (helical) span residues 140–160, 175–195, 207–227, and 250–270; these read VVIEFVIVAFQLLLHCYLSIE, PHVLLWTILFTLATLRVLNLN, NIWLVSFANYTVIFLAHILPF, and LNLVLMALLLTSPIGNNLPVL. A glycan (N-linked (GlcNAc...) asparagine) is linked at N306. Helical transmembrane passes span 352 to 372 and 392 to 412; these read FLNLFMFQWCFTTISAFSIFV and MNLAWFYVFGMFISRFIVAIC. One can recognise an ABC transmembrane type-1 1 domain in the interval 361-674; it reads CFTTISAFSI…ISDMLSYLIQ (314 aa). The N-linked (GlcNAc...) asparagine glycan is linked to N471. Helical transmembrane passes span 501-521 and 523-543; these read ISELCAYLHYFLETAIMLTVS and ILLYKVIGTAAFVGILITIII. An N-linked (GlcNAc...) asparagine glycan is attached at N573. 2 helical membrane passes run 612-632 and 643-662; these read VWCVLAFSWFITPTLITGCTF and LTTPVAFTALSLFTLLRDPL. Positions 706-947 constitute an ABC transporter 1 domain; sequence LAFENVTLRW…GLLGEDENMK (242 aa). N710 is a glycosylation site (N-linked (GlcNAc...) asparagine). Residue 741–748 coordinates ATP; the sequence is GATGSGKT. N-linked (GlcNAc...) asparagine glycans are attached at residues N784 and N798. A helical transmembrane segment spans residues 1012–1032; sequence MYGGWYTIVALASVFTAILCL. The region spanning 1032 to 1333 is the ABC transmembrane type-1 2 domain; the sequence is LQITQAWWIR…LVRQYSELEM (302 aa). A glycan (N-linked (GlcNAc...) asparagine) is linked at N1042. The next 3 helical transmembrane spans lie at 1089 to 1109, 1168 to 1188, and 1191 to 1211; these read IAKFLVVYCLIGVMSSIIGSI, IQSVFYSAIEVFATLLLISYI, and AFFPVAIIIVLGYSIVGFFYL. N-linked (GlcNAc...) asparagine glycosylation is present at N1255. The next 2 membrane-spanning stretches (helical) occupy residues 1282 to 1302 and 1305 to 1325; these read LIGALVIFSSGVFILLNINNI and GLAGISLTYAISFTEAALWLV. The ABC transporter 2 domain maps to 1372 to 1622; the sequence is VEVNNLSLKY…KKSIFYNMCE (251 aa). N1376 carries an N-linked (GlcNAc...) asparagine glycan. 1406-1413 is an ATP binding site; sequence GRTGAGKS. 3 N-linked (GlcNAc...) asparagine glycosylation sites follow: N1503, N1524, and N1573.

It belongs to the ABC transporter superfamily. ABCC family. Conjugate transporter (TC 3.A.1.208) subfamily.

The protein resides in the membrane. In terms of biological role, pleiotropic ABC efflux transporter that might be involved in the resistance to azoles such as fluconazole. This chain is Pleiotropic ABC efflux transporter of multiple drugs YBT1, found in Candida glabrata (strain ATCC 2001 / BCRC 20586 / JCM 3761 / NBRC 0622 / NRRL Y-65 / CBS 138) (Yeast).